The chain runs to 253 residues: Cyclin-C1-2 (253 aa).

This sequence belongs to the cyclin family. Cyclin C subfamily.

This chain is Cyclin-C1-2 (CYCC1-2), found in Arabidopsis thaliana (Mouse-ear cress).